A 505-amino-acid chain; its full sequence is DDB1- and CUL4-associated factor 17 (505 aa).

A run of 2 helical transmembrane segments spans residues Val-186–Ile-206 and Gly-222–Ile-242.

Interacts with DDB1, CUL4A and CUL4B.

The protein resides in the membrane. It localises to the nucleus. Its subcellular location is the nucleolus. It participates in protein modification; protein ubiquitination. May function as a substrate receptor for CUL4-DDB1 E3 ubiquitin-protein ligase complex. The sequence is that of DDB1- and CUL4-associated factor 17 (Dcaf17) from Rattus norvegicus (Rat).